We begin with the raw amino-acid sequence, 348 residues long: Rhodopsin (348 aa).

The Extracellular portion of the chain corresponds to T1–A33. N-linked (GlcNAc...) asparagine glycosylation is present at N12. The helical transmembrane segment at Y34–V58 threads the bilayer. Residues T59–N70 lie on the Cytoplasmic side of the membrane. The chain crosses the membrane as a helical span at residues Y71 to Y93. The Extracellular portion of the chain corresponds to S94–C107. Cysteines 107 and 184 form a disulfide. Residues N108–I130 traverse the membrane as a helical segment. Positions E131–W133 match the 'Ionic lock' involved in activated form stabilization motif. The Cytoplasmic portion of the chain corresponds to E131–H149. The chain crosses the membrane as a helical span at residues A150–V170. Topologically, residues G171–S199 are extracellular. Residue N197 is glycosylated (N-linked (GlcNAc...) asparagine). A helical membrane pass occupies residues F200 to G221. Over R222 to R249 the chain is Cytoplasmic. A helical transmembrane segment spans residues M250–F271. Over I272–L283 the chain is Extracellular. Residues F284–C305 traverse the membrane as a helical segment. An N6-(retinylidene)lysine modification is found at K293. Topologically, residues M306–A348 are cytoplasmic. A lipid anchor (S-palmitoyl cysteine) is attached at C320. Positions G327 to A348 are disordered. Positions A332–A348 are enriched in low complexity.

The protein belongs to the G-protein coupled receptor 1 family. Opsin subfamily. Phosphorylated on some or all of the serine and threonine residues present in the C-terminal region. In terms of processing, contains one covalently linked retinal chromophore.

Its subcellular location is the membrane. The protein localises to the cell projection. It localises to the cilium. It is found in the photoreceptor outer segment. Its function is as follows. Photoreceptor required for image-forming vision at low light intensity. While most salt water fish species use retinal as chromophore, most freshwater fish use 3-dehydroretinal, or a mixture of retinal and 3-dehydroretinal. Light-induced isomerization of 11-cis to all-trans retinal triggers a conformational change that activates signaling via G-proteins. Subsequent receptor phosphorylation mediates displacement of the bound G-protein alpha subunit by arrestin and terminates signaling. This Neoniphon argenteus (Clearfin squirrelfish) protein is Rhodopsin (rho).